The following is a 343-amino-acid chain: GTPase Obg (343 aa).

Residues 1-159 (MKFVDSASIF…LQLDMELKLM (159 aa)) enclose the Obg domain. A disordered region spans residues 121–144 (GHGGRGNQHFATSTNQAPRRSEPG). The span at 129–138 (HFATSTNQAP) shows a compositional bias: polar residues. Residues 160–323 (ADVGLVGFPN…LKDELWREVS (164 aa)) enclose the OBG-type G domain. Residues 166–173 (GFPNAGKS), 191–195 (FTTLV), 213–216 (DIPG), 280–283 (TKMD), and 304–306 (SSV) each bind GTP. Mg(2+) contacts are provided by S173 and T193. The tract at residues 322–343 (VSMRDRPEESSDPEGEGDGGTP) is disordered. Over residues 331–343 (SSDPEGEGDGGTP) the composition is skewed to acidic residues.

The protein belongs to the TRAFAC class OBG-HflX-like GTPase superfamily. OBG GTPase family. As to quaternary structure, monomer. The cofactor is Mg(2+).

It localises to the cytoplasm. Functionally, an essential GTPase which binds GTP, GDP and possibly (p)ppGpp with moderate affinity, with high nucleotide exchange rates and a fairly low GTP hydrolysis rate. Plays a role in control of the cell cycle, stress response, ribosome biogenesis and in those bacteria that undergo differentiation, in morphogenesis control. The chain is GTPase Obg from Chlorobium luteolum (strain DSM 273 / BCRC 81028 / 2530) (Pelodictyon luteolum).